A 794-amino-acid chain; its full sequence is K(+)-insensitive pyrophosphate-energized proton pump (794 aa).

The next 5 membrane-spanning stretches (helical) occupy residues A20–V40, T74–W94, I102–A122, G163–V183, and G194–T214. Residue K215 coordinates substrate. Residues D218, D222, N245, and D248 each contribute to the Mg(2+) site. 6 helical membrane passes run Y264–L284, A285–V305, G321–L341, I365–T385, A422–T442, and L446–V466. A Mg(2+)-binding site is contributed by D476. A run of 3 helical transmembrane segments spans residues A508–S528, V564–V584, and I641–G661. Ca(2+)-binding residues include D678, D704, and D708. Position 711 (K711) interacts with substrate. The next 2 membrane-spanning stretches (helical) occupy residues A717–I737 and V747–V767.

Belongs to the H(+)-translocating pyrophosphatase (TC 3.A.10) family. K(+)-insensitive subfamily. Homodimer. Mg(2+) serves as cofactor.

It is found in the cell membrane. It carries out the reaction diphosphate + H2O + H(+)(in) = 2 phosphate + 2 H(+)(out). Proton pump that utilizes the energy of pyrophosphate hydrolysis as the driving force for proton movement across the membrane. Generates a proton motive force. This chain is K(+)-insensitive pyrophosphate-energized proton pump, found in Streptomyces coelicolor (strain ATCC BAA-471 / A3(2) / M145).